Here is a 437-residue protein sequence, read N- to C-terminus: MTSVSVAFTNVAGLLAHGSKSRCRNAEVLRSRSAAERASGDRQRWRICMSDGERVHAYTETVVESQLGFSVSRRALLHHLALGALAVALPRSGALVAAPLAETVRGAAWKQVPLPTESVLFDIDFSQKDPNHGWLVGTRGLVLETRDGGETWEPRAFEDVEREEELNYRFSNVSFSGDEAWVIGKPPVMLRSTDGGKNWSRILLSPKLPGEPLLVTALGPNCAEMVTSSGAIYVTENGGINWKALVRETIDATLNRTISSGITGASYFTGSIVSVSRDVHGNYIAIPSRGNFFLTWVPGSDFWTPHARSTSRRISAIGFIQNDATKGIWETIRGGGLGFTKPNVNLNSTETIAFDMVDSKTGGYGILDVAFQDDRHVWAAVGGGSMYRSDDGGKTWRRDPLVSKVGANLYKIKFFGSQRGFVLGADGVLLKFHPENV.

The protein belongs to the Ycf48 family.

It localises to the plastid. Its subcellular location is the chloroplast thylakoid membrane. Essential for photosystem II (PSII) biogenesis; required for assembly of an early intermediate in PSII assembly that includes D2 (psbD) and cytochrome b559. The sequence is that of Photosystem II stability/assembly factor HCF136, chloroplastic from Cyanidioschyzon merolae (strain NIES-3377 / 10D) (Unicellular red alga).